A 125-amino-acid chain; its full sequence is MRIAGVNLPLNKHAVIALTHIYGIGKTSAKNILERVGIDPARKISELNDEEAHSIREVIAEDYIVEGQARGEQQLSVKRLMDIGCYRGLRHRRSLPARGQNTQTNARTRKGRRKTVAGKKKAVKK.

A disordered region spans residues 92 to 125 (RRSLPARGQNTQTNARTRKGRRKTVAGKKKAVKK). The segment covering 107-125 (RTRKGRRKTVAGKKKAVKK) has biased composition (basic residues).

Belongs to the universal ribosomal protein uS13 family. As to quaternary structure, part of the 30S ribosomal subunit. Forms a loose heterodimer with protein S19. Forms two bridges to the 50S subunit in the 70S ribosome.

Its function is as follows. Located at the top of the head of the 30S subunit, it contacts several helices of the 16S rRNA. In the 70S ribosome it contacts the 23S rRNA (bridge B1a) and protein L5 of the 50S subunit (bridge B1b), connecting the 2 subunits; these bridges are implicated in subunit movement. Contacts the tRNAs in the A and P-sites. This is Small ribosomal subunit protein uS13 from Chlorobium phaeobacteroides (strain BS1).